A 423-amino-acid chain; its full sequence is Elongation factor 1-alpha (423 aa).

The 207-residue stretch at 5-211 folds into the tr-type G domain; sequence KEHINLAFIG…DNLEPPEKPT (207 aa). Residues 14 to 21 form a G1 region; sequence GHVDHGKS. 14-21 contacts GTP; sequence GHVDHGKS. S21 lines the Mg(2+) pocket. Positions 60–64 are G2; that stretch reads GVTID. Positions 81-84 are G3; that stretch reads DCPG. Residues 81 to 85 and 136 to 139 contribute to the GTP site; these read DCPGH and NKMD. Positions 136-139 are G4; the sequence is NKMD. The interval 175-177 is G5; that stretch reads SAF.

The protein belongs to the TRAFAC class translation factor GTPase superfamily. Classic translation factor GTPase family. EF-Tu/EF-1A subfamily.

The protein resides in the cytoplasm. It carries out the reaction GTP + H2O = GDP + phosphate + H(+). Functionally, GTP hydrolase that promotes the GTP-dependent binding of aminoacyl-tRNA to the A-site of ribosomes during protein biosynthesis. The protein is Elongation factor 1-alpha of Methanopyrus kandleri (strain AV19 / DSM 6324 / JCM 9639 / NBRC 100938).